An 834-amino-acid polypeptide reads, in one-letter code: Leucine--tRNA ligase (834 aa).

The 'HIGH' region motif lies at 36–46 (PYPSGKIHVGH). Positions 602–606 (KMSKS) match the 'KMSKS' region motif. Lysine 605 is an ATP binding site.

It belongs to the class-I aminoacyl-tRNA synthetase family.

Its subcellular location is the cytoplasm. The catalysed reaction is tRNA(Leu) + L-leucine + ATP = L-leucyl-tRNA(Leu) + AMP + diphosphate. The chain is Leucine--tRNA ligase from Rickettsia canadensis (strain McKiel).